The following is a 1086-amino-acid chain: MRIFTLGKGRISRGYARQVNPSLFAKYSYCIANNPWYFILVFTLLSITGIYSSLVAYQQSLYDQSLARWSAWYAESINAEANVITKQLYLLGTNTSVFSEDYLSNAYRWETSFHQYLAEYGYPCIRDEKSCVTISPIPKYYGKVDPVAQYSYTKGLPENEREVNKLRNDTIAEGFDSLSAFVITYFLKPEQVDTFHVVLKKFISETPNLYASLLDTSPTTVVARIPDLTVIYRWYLWVGFGVGLFAYLYLSLVRLHDIRAKFGLTATIFIQSGTAYFSTCSLLYFFERTGPICPWPMAYYIIIFMDIENSFRLLRAVIASPQTKRVPSRIMEGFSSTIIASFSSLLKKLLTLFVLSFFVYPLVQEFCLFLACSFVVSFLLHGSFFLAVLSVDIRRLELQDFLDSNSSNRNSKWWVPYLEYVRFMWSPWIIDNLGTVSFHMYVIYLQLQSSTDINGSWRLASPNIRFLITLYHRLGRILRERKLFPLITTGWFGDPTFLEALKEKTMAENLVIALYRPVILDTVNRRDYTNVYNSFHDRRVWRWSTFFSILFAIDFAVGLLVKALLRGWSDHDELSTDTTLHEEKFRIEPVPVHHQLDILKIAVSENYKTFASVGLDRCLVVWDLRQWCTKLVLSKEQMPRTLKAIALDPQGNYVSLFSKDTLFILNVESPCLMLQHSYHCKPNSKLNVFWMPGTHKDDEWKNFELVVVESSGEIQVFSLTIEIEGADIALVEKFQLSSPIIKSISIVSPTANRIACLTESGEVTVYSKKGPVWSPKILSQNKNYLTETKKDIYGIAMADILFLARDSGVDMIDLKNDELLHSFTLPPIKVNTFSVGVSNSRFVNGQFRVSSISFCFTHAVTEKVLYYYYGNECNESYIILNKWDQQPNLVDVHDPDNSLACLTFDELQENIHEVEDASECVMSSDGLYIFGMRRKSSSGICPTADEKNEDNGFTLRNRKLRTGHYNWTSYVPLLDSYMQDMEHKKNTHSGGETQVWEVWMYSQSEKKHRCKSLKMYNSLIIADPGPSLAVSDRCVAIVLGNYVALVGYGSEIFRDFYQIRNSDEMDRILRRKRKNLQRKRSGTIGC.

The Cytoplasmic portion of the chain corresponds to 1–35 (MRIFTLGKGRISRGYARQVNPSLFAKYSYCIANNP). A helical membrane pass occupies residues 36-56 (WYFILVFTLLSITGIYSSLVA). The Lumenal portion of the chain corresponds to 57 to 229 (YQQSLYDQSL…TVVARIPDLT (173 aa)). N-linked (GlcNAc...) asparagine glycans are attached at residues N94 and N168. Residues 230–250 (VIYRWYLWVGFGVGLFAYLYL) traverse the membrane as a helical segment. In terms of domain architecture, SSD spans 233–391 (RWYLWVGFGV…GSFFLAVLSV (159 aa)). Residues 251 to 265 (SLVRLHDIRAKFGLT) lie on the Cytoplasmic side of the membrane. Residues 266–286 (ATIFIQSGTAYFSTCSLLYFF) traverse the membrane as a helical segment. The Lumenal portion of the chain corresponds to 287-290 (ERTG). Residues 291-311 (PICPWPMAYYIIIFMDIENSF) traverse the membrane as a helical segment. Topologically, residues 312–337 (RLLRAVIASPQTKRVPSRIMEGFSST) are cytoplasmic. A helical membrane pass occupies residues 338–358 (IIASFSSLLKKLLTLFVLSFF). Residues 359–367 (VYPLVQEFC) lie on the Lumenal side of the membrane. The chain crosses the membrane as a helical span at residues 368 to 388 (LFLACSFVVSFLLHGSFFLAV). Residues 389–422 (LSVDIRRLELQDFLDSNSSNRNSKWWVPYLEYVR) are Cytoplasmic-facing. Residues 396–401 (LELQDF) carry the ER export signal motif. A helical membrane pass occupies residues 423–443 (FMWSPWIIDNLGTVSFHMYVI). The Lumenal segment spans residues 444–544 (YLQLQSSTDI…FHDRRVWRWS (101 aa)). Residue N454 is glycosylated (N-linked (GlcNAc...) asparagine). Residues 545-565 (TFFSILFAIDFAVGLLVKALL) traverse the membrane as a helical segment. Residues 566–1086 (RGWSDHDELS…QRKRSGTIGC (521 aa)) lie on the Cytoplasmic side of the membrane. WD repeat units lie at residues 593–632 (HHQL…TKLV), 637–675 (QMPR…LMLQ), 680–727 (CKPN…EGAD), 736–776 (LSSP…WSPK), and 963–1009 (GHYN…KKHR). The tract at residues 640 to 1086 (RTLKAIALDP…QRKRSGTIGC (447 aa)) is interaction with sre1.

The protein belongs to the WD repeat SCAP family. As to quaternary structure, forms a tight complex with scp1, composed of 4 copies of scp1 and 4 copies of sre1.

It is found in the endoplasmic reticulum membrane. The protein resides in the golgi apparatus membrane. Escort protein required for sre1 processing at low sterol as well as oxygen levels. May regulate export of the scp1/sre1 complex from the ER at low sterol or oxygen levels. 4-methyl sterols bound to scp1 may mask an ER export signal in scp1 leading to retention of the complex in the ER. Release of 4-methyl sterols may trigger a conformational change in the SSD domain of scp1 unmasking the ER export signal leading to recruitment into COPII-coated vesicles, transport to the Golgi complex, proteolytic cleavage of sre1 in the Golgi, release of the transcription factor fragment of sre1 from the membrane, its import into the nucleus and up-regulation of genes required for ergosterol biosynthesis as well as anaerobic growth. Binds 4-methyl sterols. This Schizosaccharomyces pombe (strain 972 / ATCC 24843) (Fission yeast) protein is Sterol regulatory element-binding protein cleavage-activating protein.